The sequence spans 403 residues: S-adenosylmethionine synthase (403 aa).

Histidine 22 provides a ligand contact to ATP. Residue aspartate 24 participates in Mg(2+) binding. Residue glutamate 50 participates in K(+) binding. The L-methionine site is built by glutamate 63 and glutamine 107. The interval 107–117 is flexible loop; sequence QSPDIAMGVDK. Residues 182–184, 248–249, aspartate 257, 263–264, alanine 280, and lysine 284 contribute to the ATP site; these read DAK, RF, and RK. Aspartate 257 is an L-methionine binding site. An L-methionine-binding site is contributed by lysine 288.

The protein belongs to the AdoMet synthase family. As to quaternary structure, homotetramer; dimer of dimers. It depends on Mg(2+) as a cofactor. K(+) is required as a cofactor.

It localises to the cytoplasm. It carries out the reaction L-methionine + ATP + H2O = S-adenosyl-L-methionine + phosphate + diphosphate. It participates in amino-acid biosynthesis; S-adenosyl-L-methionine biosynthesis; S-adenosyl-L-methionine from L-methionine: step 1/1. In terms of biological role, catalyzes the formation of S-adenosylmethionine (AdoMet) from methionine and ATP. The overall synthetic reaction is composed of two sequential steps, AdoMet formation and the subsequent tripolyphosphate hydrolysis which occurs prior to release of AdoMet from the enzyme. This is S-adenosylmethionine synthase from Chloroflexus aurantiacus (strain ATCC 29366 / DSM 635 / J-10-fl).